The sequence spans 184 residues: Photosystem I assembly protein Ycf4 (184 aa).

Transmembrane regions (helical) follow at residues 22-42 and 57-77; these read FCWACILFLGSLGFLLVGTSS and ILFFPQGIVMSFYGIAGLFIS.

It belongs to the Ycf4 family.

It is found in the plastid. The protein localises to the chloroplast thylakoid membrane. In terms of biological role, seems to be required for the assembly of the photosystem I complex. The polypeptide is Photosystem I assembly protein Ycf4 (Liriodendron tulipifera (Tuliptree)).